The following is a 158-amino-acid chain: SsrA-binding protein (158 aa).

Positions aspartate 135 to aspartate 158 are disordered. The span at lysine 141 to aspartate 158 shows a compositional bias: basic and acidic residues.

Belongs to the SmpB family.

It is found in the cytoplasm. In terms of biological role, required for rescue of stalled ribosomes mediated by trans-translation. Binds to transfer-messenger RNA (tmRNA), required for stable association of tmRNA with ribosomes. tmRNA and SmpB together mimic tRNA shape, replacing the anticodon stem-loop with SmpB. tmRNA is encoded by the ssrA gene; the 2 termini fold to resemble tRNA(Ala) and it encodes a 'tag peptide', a short internal open reading frame. During trans-translation Ala-aminoacylated tmRNA acts like a tRNA, entering the A-site of stalled ribosomes, displacing the stalled mRNA. The ribosome then switches to translate the ORF on the tmRNA; the nascent peptide is terminated with the 'tag peptide' encoded by the tmRNA and targeted for degradation. The ribosome is freed to recommence translation, which seems to be the essential function of trans-translation. The sequence is that of SsrA-binding protein from Psychrobacter cryohalolentis (strain ATCC BAA-1226 / DSM 17306 / VKM B-2378 / K5).